A 71-amino-acid chain; its full sequence is Small ribosomal subunit protein bS18 (71 aa).

Belongs to the bacterial ribosomal protein bS18 family. In terms of assembly, part of the 30S ribosomal subunit. Forms a tight heterodimer with protein bS6.

Its function is as follows. Binds as a heterodimer with protein bS6 to the central domain of the 16S rRNA, where it helps stabilize the platform of the 30S subunit. The protein is Small ribosomal subunit protein bS18 of Acaryochloris marina (strain MBIC 11017).